A 691-amino-acid chain; its full sequence is Protein phosphatase Slingshot homolog (691 aa).

In terms of domain architecture, DEK-C spans 236 to 291; sequence EETERIIKLKLRDILRESDLENITSKEVRSALEQHTLCALQDYKEFIDNEMIIILA. In terms of domain architecture, Tyrosine-protein phosphatase spans 295–436; sequence RPSEIFPYLY…LQTYQGILGA (142 aa). The active-site Phosphocysteine intermediate is C380. Residues 532 to 580 are a coiled coil; sequence NEHVLSKEQIIQEEKKVMELEKGPEWVVKNNVLEEMKETEERELPNFEL. The tract at residues 585–620 is disordered; that stretch reads NQSRERDQETIKESSVITQGSSSLDEVFESSTPTRS. Residues 587 to 596 are compositionally biased toward basic and acidic residues; it reads SRERDQETIK. A compositionally biased stretch (polar residues) spans 597–619; the sequence is ESSVITQGSSSLDEVFESSTPTR.

Belongs to the protein-tyrosine phosphatase family. Interacts with actin and this stimulates phosphatase activity.

It is found in the cytoplasm. The protein resides in the cytoskeleton. It localises to the cleavage furrow. Its subcellular location is the midbody. It catalyses the reaction O-phospho-L-tyrosyl-[protein] + H2O = L-tyrosyl-[protein] + phosphate. The catalysed reaction is O-phospho-L-seryl-[protein] + H2O = L-seryl-[protein] + phosphate. The enzyme catalyses O-phospho-L-threonyl-[protein] + H2O = L-threonyl-[protein] + phosphate. Its function is as follows. Protein phosphatase which regulates actin filament dynamics. Dephosphorylates and activates the actin binding/depolymerizing factor cofilin, which subsequently binds to actin filaments and stimulates their disassembly. Required for completion of the gastrulation movement and for cytokinesis. This chain is Protein phosphatase Slingshot homolog (ssh), found in Xenopus laevis (African clawed frog).